Here is a 237-residue protein sequence, read N- to C-terminus: Phosphoribosylaminoimidazole-succinocarboxamide synthase (237 aa).

It belongs to the SAICAR synthetase family.

The enzyme catalyses 5-amino-1-(5-phospho-D-ribosyl)imidazole-4-carboxylate + L-aspartate + ATP = (2S)-2-[5-amino-1-(5-phospho-beta-D-ribosyl)imidazole-4-carboxamido]succinate + ADP + phosphate + 2 H(+). The protein operates within purine metabolism; IMP biosynthesis via de novo pathway; 5-amino-1-(5-phospho-D-ribosyl)imidazole-4-carboxamide from 5-amino-1-(5-phospho-D-ribosyl)imidazole-4-carboxylate: step 1/2. This chain is Phosphoribosylaminoimidazole-succinocarboxamide synthase, found in Psychrobacter cryohalolentis (strain ATCC BAA-1226 / DSM 17306 / VKM B-2378 / K5).